A 734-amino-acid chain; its full sequence is Photosystem I P700 chlorophyll a apoprotein A2 (734 aa).

The next 8 helical transmembrane spans lie at 46–69 (IFAS…FHVA), 135–158 (LYNG…LHLE), 175–199 (LNHH…HVAI), 273–291 (IAHH…GHMY), 330–353 (LHFQ…QHMY), 369–395 (AALY…IFFI), 417–439 (AIIS…LYVH), and 517–535 (FLVH…LILV). The [4Fe-4S] cluster site is built by cysteine 559 and cysteine 568. A run of 2 helical transmembrane segments spans residues 575–596 (AFYL…YWHW) and 643–665 (LAVW…MFLI). Chlorophyll a-binding residues include histidine 654, methionine 662, and tyrosine 670. Tryptophan 671 serves as a coordination point for phylloquinone. Residues 707–727 (LVGLAHFSVGYVFTYAAFLIA) form a helical membrane-spanning segment.

Belongs to the PsaA/PsaB family. The PsaA/B heterodimer binds the P700 chlorophyll special pair and subsequent electron acceptors. PSI consists of a core antenna complex that captures photons, and an electron transfer chain that converts photonic excitation into a charge separation. The eukaryotic PSI reaction center is composed of at least 11 subunits. P700 is a chlorophyll a/chlorophyll a' dimer, A0 is one or more chlorophyll a, A1 is one or both phylloquinones and FX is a shared 4Fe-4S iron-sulfur center. is required as a cofactor.

The protein localises to the plastid. It is found in the chloroplast thylakoid membrane. The catalysed reaction is reduced [plastocyanin] + hnu + oxidized [2Fe-2S]-[ferredoxin] = oxidized [plastocyanin] + reduced [2Fe-2S]-[ferredoxin]. Functionally, psaA and PsaB bind P700, the primary electron donor of photosystem I (PSI), as well as the electron acceptors A0, A1 and FX. PSI is a plastocyanin/cytochrome c6-ferredoxin oxidoreductase, converting photonic excitation into a charge separation, which transfers an electron from the donor P700 chlorophyll pair to the spectroscopically characterized acceptors A0, A1, FX, FA and FB in turn. Oxidized P700 is reduced on the lumenal side of the thylakoid membrane by plastocyanin or cytochrome c6. This is Photosystem I P700 chlorophyll a apoprotein A2 from Euglena gracilis.